The primary structure comprises 456 residues: Protein king tubby (456 aa).

The disordered stretch occupies residues 111–202 (HELEDEESSP…SNGAGGESEG (92 aa)). Residues 120–152 (PVTVIEQQQTAPHSANSTHSQRPSTTRQPSFND) are compositionally biased toward polar residues. Ser149 carries the post-translational modification Phosphoserine.

Belongs to the TUB family.

The protein resides in the cytoplasm. The protein localises to the nucleus. It is found in the cell projection. Its subcellular location is the cilium membrane. It localises to the rhabdomere. The chain is Protein king tubby from Drosophila pseudoobscura pseudoobscura (Fruit fly).